A 104-amino-acid polypeptide reads, in one-letter code: Urease subunit beta (104 aa).

The protein belongs to the urease beta subunit family. As to quaternary structure, heterotrimer of UreA (gamma), UreB (beta) and UreC (alpha) subunits. Three heterotrimers associate to form the active enzyme.

It is found in the cytoplasm. The catalysed reaction is urea + 2 H2O + H(+) = hydrogencarbonate + 2 NH4(+). It functions in the pathway nitrogen metabolism; urea degradation; CO(2) and NH(3) from urea (urease route): step 1/1. This chain is Urease subunit beta, found in Synechococcus sp. (strain RCC307).